The primary structure comprises 502 residues: Sulfate adenylyltransferase (502 aa).

The tract at residues 1–167 (MPSPHGGVLQ…LEAIQLPVHY (167 aa)) is N-terminal. A catalytic region spans residues 168-393 (DYPGWRKTPA…LRESNPSRPK (226 aa)). Sulfate is bound at residue glutamine 195. Residues 195-198 (QTRN) and 289-292 (GRDH) each bind ATP. Active-site residues include threonine 196, arginine 197, and asparagine 198. Arginine 197 contributes to the sulfate binding site. Alanine 293 contributes to the sulfate binding site. Valine 331 provides a ligand contact to ATP. A required for oligomerization; adenylyl-sulfate kinase-like region spans residues 394 to 502 (QGFALVLSET…FLEDQGFFQF (109 aa)).

This sequence belongs to the sulfate adenylyltransferase family. As to quaternary structure, homohexamer. Dimer of trimers.

Its subcellular location is the cytoplasm. The catalysed reaction is sulfate + ATP + H(+) = adenosine 5'-phosphosulfate + diphosphate. It functions in the pathway sulfur metabolism; hydrogen sulfide biosynthesis; sulfite from sulfate: step 1/3. Functionally, catalyzes the first intracellular reaction of sulfate assimilation, forming adenosine-5'-phosphosulfate (APS) from inorganic sulfate and ATP. Plays an important role in sulfate activation as a component of the biosynthesis pathway of sulfur-containing amino acids. This is Sulfate adenylyltransferase from Kluyveromyces lactis (strain ATCC 8585 / CBS 2359 / DSM 70799 / NBRC 1267 / NRRL Y-1140 / WM37) (Yeast).